Here is a 234-residue protein sequence, read N- to C-terminus: Thymidylate kinase (234 aa).

21-28 (GGEGTGKS) provides a ligand contact to ATP.

Belongs to the thymidylate kinase family.

The catalysed reaction is dTMP + ATP = dTDP + ADP. Its function is as follows. Phosphorylation of dTMP to form dTDP in both de novo and salvage pathways of dTTP synthesis. The chain is Thymidylate kinase from Rhizobium meliloti (strain 1021) (Ensifer meliloti).